The chain runs to 268 residues: Large ribosomal subunit protein uL4 (268 aa).

Belongs to the universal ribosomal protein uL4 family. In terms of assembly, part of the 50S ribosomal subunit.

In terms of biological role, one of the primary rRNA binding proteins, this protein initially binds near the 5'-end of the 23S rRNA. It is important during the early stages of 50S assembly. It makes multiple contacts with different domains of the 23S rRNA in the assembled 50S subunit and ribosome. Forms part of the polypeptide exit tunnel. The chain is Large ribosomal subunit protein uL4 from Nanoarchaeum equitans (strain Kin4-M).